Reading from the N-terminus, the 193-residue chain is Orotate phosphoribosyltransferase (193 aa).

114 to 122 (EDVITTGGS) is a 5-phospho-alpha-D-ribose 1-diphosphate binding site. Residues Thr-118 and Arg-146 each contribute to the orotate site.

Belongs to the purine/pyrimidine phosphoribosyltransferase family. PyrE subfamily. In terms of assembly, homodimer. Requires Mg(2+) as cofactor.

The enzyme catalyses orotidine 5'-phosphate + diphosphate = orotate + 5-phospho-alpha-D-ribose 1-diphosphate. It participates in pyrimidine metabolism; UMP biosynthesis via de novo pathway; UMP from orotate: step 1/2. Functionally, catalyzes the transfer of a ribosyl phosphate group from 5-phosphoribose 1-diphosphate to orotate, leading to the formation of orotidine monophosphate (OMP). The polypeptide is Orotate phosphoribosyltransferase (Chlorobium phaeobacteroides (strain DSM 266 / SMG 266 / 2430)).